The following is a 662-amino-acid chain: Potassium channel KAT3 (662 aa).

At 1-90 (MSTTTTEARS…HFDRRYRLWE (90 aa)) the chain is on the cytoplasmic side. The chain crosses the membrane as a helical span at residues 91 to 111 (LFLVILVGYSAWASLFELAFE). Residues 112–118 (KAAEGAL) are Extracellular-facing. A helical membrane pass occupies residues 119–139 (LTIDLVVDFFFAVDIILTFFV). Topologically, residues 140-163 (SYLDNTTYLNVTDHKLIAKRYLKS) are cytoplasmic. The helical transmembrane segment at 164–184 (VAFVMDVASTLPIQFIYKTIT) threads the bilayer. The Extracellular portion of the chain corresponds to 185-194 (GDVGRGQAFG). A helical; Voltage-sensor membrane pass occupies residues 195–215 (FLNLLRLWRLRRVAELFKRLE). At 216–229 (KDAHFNYFVIRVIK) the chain is on the cytoplasmic side. The helical transmembrane segment at 230-250 (LLCVTIFWIHLAGCILYWIAY) threads the bilayer. Residues 251–277 (HYPRPTDTWIGSQVEDFKERSVWLGYT) lie on the Extracellular side of the membrane. Residues 278–297 (YSMYWSIVTLTTVGYGDLHA) constitute an intramembrane region (pore-forming). Over 298–301 (VNSR) the chain is Extracellular. Residues 302–322 (EKTFNMFYMLFNIGLTSYIIG) form a helical membrane-spanning segment. At 323 to 662 (IMTNLVVHGA…LRENDHLYIF (340 aa)) the chain is on the cytoplasmic side. An a nucleoside 3',5'-cyclic phosphate-binding site is contributed by 406–527 (LFKGFPEGLL…MIIANFMTYL (122 aa)). A coiled-coil region spans residues 528–558 (KGLNDELKKEIPFLRDLLDDADAQVQETVQS). A KHA domain is found at 591–662 (RVIIHGQAPP…LRENDHLYIF (72 aa)).

It belongs to the potassium channel family. Plant (TC 1.A.1.4) subfamily. The potassium channel is probably composed of a homo- or heterotetrameric complex of pore-forming subunits. May interact with AKT1 and AKT2. Interacts with SLAC1. Expressed predominantly in root hairs and root endodermis and, at a lower level, in leaf nodes, trichomes, and hydathodes.

The protein localises to the membrane. Functionally, probable modulatory (alpha) subunit of inward-rectifying potassium channels. Could mediate potassium uptake from the soil solution by plant roots in association with AKT1. The sequence is that of Potassium channel KAT3 (KAT3) from Arabidopsis thaliana (Mouse-ear cress).